The primary structure comprises 415 residues: Light-independent protochlorophyllide reductase subunit N (415 aa).

Positions 16, 41, and 98 each coordinate [4Fe-4S] cluster.

It belongs to the BchN/ChlN family. Protochlorophyllide reductase is composed of three subunits; BchL, BchN and BchB. Forms a heterotetramer of two BchB and two BchN subunits. The cofactor is [4Fe-4S] cluster.

It catalyses the reaction chlorophyllide a + oxidized 2[4Fe-4S]-[ferredoxin] + 2 ADP + 2 phosphate = protochlorophyllide a + reduced 2[4Fe-4S]-[ferredoxin] + 2 ATP + 2 H2O. Its pathway is porphyrin-containing compound metabolism; bacteriochlorophyll biosynthesis (light-independent). Its function is as follows. Component of the dark-operative protochlorophyllide reductase (DPOR) that uses Mg-ATP and reduced ferredoxin to reduce ring D of protochlorophyllide (Pchlide) to form chlorophyllide a (Chlide). This reaction is light-independent. The NB-protein (BchN-BchB) is the catalytic component of the complex. This Roseiflexus sp. (strain RS-1) protein is Light-independent protochlorophyllide reductase subunit N.